Reading from the N-terminus, the 950-residue chain is Glycine dehydrogenase (decarboxylating) (950 aa).

Lys698 carries the N6-(pyridoxal phosphate)lysine modification.

The protein belongs to the GcvP family. As to quaternary structure, the glycine cleavage system is composed of four proteins: P, T, L and H. Requires pyridoxal 5'-phosphate as cofactor.

The catalysed reaction is N(6)-[(R)-lipoyl]-L-lysyl-[glycine-cleavage complex H protein] + glycine + H(+) = N(6)-[(R)-S(8)-aminomethyldihydrolipoyl]-L-lysyl-[glycine-cleavage complex H protein] + CO2. Functionally, the glycine cleavage system catalyzes the degradation of glycine. The P protein binds the alpha-amino group of glycine through its pyridoxal phosphate cofactor; CO(2) is released and the remaining methylamine moiety is then transferred to the lipoamide cofactor of the H protein. This is Glycine dehydrogenase (decarboxylating) from Neisseria meningitidis serogroup C (strain 053442).